The primary structure comprises 241 residues: Agamous-like MADS-box protein AGL8 homolog (241 aa).

An MADS-box domain is found at 3 to 57 (RGRVQLKRIENKINRQVTFSKRRSGLLKKAHEISVLCDAEVALVIFSSKGKLFEY). The K-box domain occupies 88–178 (SENWVLEHAK…LKKIKEREKN (91 aa)).

Its subcellular location is the nucleus. In terms of biological role, probable transcription factor. In Sinapis alba (White mustard), this protein is Agamous-like MADS-box protein AGL8 homolog (AGL8).